We begin with the raw amino-acid sequence, 304 residues long: MSSVKPLVYAVIRFLREQSQMDAYTSDEQESLEVAIQCLETVFKISPEDTHLAVSQPLTEMFTNSVCKNDIRPLSNSVPEDVGKADQLKDEGNNHMKEENYAAAVDCYTQAIELDPNNAVYYCNRAAAQSKLSHYTDAIKDCEKAIAIDSKYSKAYGRMGLALTAMNKFEEAVTSYQKALDLDPENDSYKSNLKIAEQKLREVSSPTGTGLTFDMASLINNPAFITMAASLMQNPQVQQLMSGMMTNAIGGPAAGVGGLTDLSSLIQAGQQFAQQIQQQNPELIEQLRNHIRSRSFSSSTEEHS.

TPR repeat units follow at residues 15–49 (LREQ…SPED), 85–118 (ADQL…DPNN), 120–152 (VYYC…DSKY), and 153–186 (SKAY…DPEN). At Lys131 the chain carries N6-acetyllysine. A phosphoserine mark is found at Ser293, Ser295, and Ser297.

It belongs to the SGT family. Homooligomerize. As to expression, expressed specifically in brain.

Co-chaperone that binds directly to HSC70 and HSP70 and regulates their ATPase activity. This is Small glutamine-rich tetratricopeptide repeat-containing protein beta (Sgtb) from Rattus norvegicus (Rat).